A 222-amino-acid chain; its full sequence is 2-hydroxypent-2,4-dienoate hydratase (222 aa).

Belongs to the hydratase/decarboxylase family.

The protein operates within aromatic compound metabolism; benzoate degradation via hydroxylation. In terms of biological role, conversion of 2-hydroxypent-2,4-dienoate into 4-hydroxy-2-oxopentanoate. The sequence is that of 2-hydroxypent-2,4-dienoate hydratase (xylJ) from Pseudomonas putida (Arthrobacter siderocapsulatus).